Here is a 197-residue protein sequence, read N- to C-terminus: Protein Hikeshi (197 aa).

The segment at 18-55 (VAEDKFVFDLPDYESINHVVVFMLGTIPFPEGMGGSVY) is required for F-X-F-G repeats-nucleoporins recognition and nuclear import. The interval 124–134 (QTPVGNAAVSS) is flexible linker region involved in nuclear import of HSP70 proteins.

It belongs to the OPI10 family. Forms an asymmetric homodimer; required for binding and nuclear import of HSP70 proteins. Interacts with ATP-bound HSP70 proteins. Interacts with NUP62 and NUP153 (via F-X-F-G repeats). Interacts with HSPA8.

Its subcellular location is the cytoplasm. The protein resides in the cytosol. It is found in the nucleus. Acts as a specific nuclear import carrier for HSP70 proteins following heat-shock stress: acts by mediating the nucleoporin-dependent translocation of ATP-bound HSP70 proteins into the nucleus. HSP70 proteins import is required to protect cells from heat shock damages. Does not translocate ADP-bound HSP70 proteins into the nucleus. This chain is Protein Hikeshi, found in Homo sapiens (Human).